We begin with the raw amino-acid sequence, 245 residues long: Biosynthetic peptidoglycan transglycosylase (245 aa).

The helical transmembrane segment at 19–39 (IVYAGAVFAAAWLATQLFYFV) threads the bilayer.

It belongs to the glycosyltransferase 51 family.

It is found in the cell inner membrane. The catalysed reaction is [GlcNAc-(1-&gt;4)-Mur2Ac(oyl-L-Ala-gamma-D-Glu-L-Lys-D-Ala-D-Ala)](n)-di-trans,octa-cis-undecaprenyl diphosphate + beta-D-GlcNAc-(1-&gt;4)-Mur2Ac(oyl-L-Ala-gamma-D-Glu-L-Lys-D-Ala-D-Ala)-di-trans,octa-cis-undecaprenyl diphosphate = [GlcNAc-(1-&gt;4)-Mur2Ac(oyl-L-Ala-gamma-D-Glu-L-Lys-D-Ala-D-Ala)](n+1)-di-trans,octa-cis-undecaprenyl diphosphate + di-trans,octa-cis-undecaprenyl diphosphate + H(+). The protein operates within cell wall biogenesis; peptidoglycan biosynthesis. In terms of biological role, peptidoglycan polymerase that catalyzes glycan chain elongation from lipid-linked precursors. This chain is Biosynthetic peptidoglycan transglycosylase, found in Burkholderia multivorans (strain ATCC 17616 / 249).